The primary structure comprises 503 residues: Protein phosphatase eya-1 (503 aa).

The active-site Nucleophile is Asp237. The Mg(2+) site is built by Asp237 and Asp239. Residue Asp239 is the Proton donor of the active site.

The protein belongs to the HAD-like hydrolase superfamily. EYA family. As to quaternary structure, interacts (via C-terminus) with ceh-34 (via N-terminus). Mg(2+) is required as a cofactor. Expressed in body wall muscles. Expressed in BAG sensory neurons and in other head neurons.

It is found in the nucleus. It carries out the reaction O-phospho-L-tyrosyl-[protein] + H2O = L-tyrosyl-[protein] + phosphate. Tyrosine protein phosphatase. Acts probably as a transcription regulator in the embryonic and postembryonic development of several tissues including pharynx, vulva and gonads. Required for the development of anterior tissues during late embryogenesis. Together with ceh-34, required to specify the coelomocyte fate in embryonic and postembryonic precursors. In the anterior part of the embryo, prevents apoptosis in cells that are not fated to die. Together with ceh-34 activates proapoptotic factor egl-1 expression to promote motor neuron M4 sister cell apoptosis. Also promotes apoptosis of I1 pharyngeal neuron sister cell. Plays a role in locomotion and fertility. May play a role in resistance to heat and oxidative stresses. May cooperate with the transcription factors vab-3 and ceh-32 to repress transcription factor ets-5 expression in non BAG neuronal cells. This is Protein phosphatase eya-1 from Caenorhabditis elegans.